Reading from the N-terminus, the 404-residue chain is Probable tRNA sulfurtransferase (404 aa).

One can recognise a THUMP domain in the interval 60–165 (QPVAESLKQI…EEAAYISYET (106 aa)). ATP-binding positions include 183-184 (ML), 208-209 (HF), Arg-265, Gly-287, and Gln-296.

The protein belongs to the ThiI family.

It localises to the cytoplasm. The catalysed reaction is [ThiI sulfur-carrier protein]-S-sulfanyl-L-cysteine + a uridine in tRNA + 2 reduced [2Fe-2S]-[ferredoxin] + ATP + H(+) = [ThiI sulfur-carrier protein]-L-cysteine + a 4-thiouridine in tRNA + 2 oxidized [2Fe-2S]-[ferredoxin] + AMP + diphosphate. The enzyme catalyses [ThiS sulfur-carrier protein]-C-terminal Gly-Gly-AMP + S-sulfanyl-L-cysteinyl-[cysteine desulfurase] + AH2 = [ThiS sulfur-carrier protein]-C-terminal-Gly-aminoethanethioate + L-cysteinyl-[cysteine desulfurase] + A + AMP + 2 H(+). It functions in the pathway cofactor biosynthesis; thiamine diphosphate biosynthesis. Its function is as follows. Catalyzes the ATP-dependent transfer of a sulfur to tRNA to produce 4-thiouridine in position 8 of tRNAs, which functions as a near-UV photosensor. Also catalyzes the transfer of sulfur to the sulfur carrier protein ThiS, forming ThiS-thiocarboxylate. This is a step in the synthesis of thiazole, in the thiamine biosynthesis pathway. The sulfur is donated as persulfide by IscS. The chain is Probable tRNA sulfurtransferase from Streptococcus sanguinis (strain SK36).